A 413-amino-acid polypeptide reads, in one-letter code: Putative acid phosphatase 11 (413 aa).

The Nucleophile role is filled by histidine 35. Aspartate 315 acts as the Proton donor in catalysis. Cysteine 381 and cysteine 387 are disulfide-bonded.

This sequence belongs to the histidine acid phosphatase family.

It catalyses the reaction a phosphate monoester + H2O = an alcohol + phosphate. This chain is Putative acid phosphatase 11 (pho-11), found in Caenorhabditis elegans.